A 345-amino-acid polypeptide reads, in one-letter code: Viral Fc-gamma receptor-like protein UL119 (345 aa).

A signal peptide spans 1–23 (MCSVLAIALVVALLGDMHPGVKS). A disordered region spans residues 23–42 (SSTTSAVTSPSNTTVTSTTS). The Virion surface portion of the chain corresponds to 24–294 (STTSAVTSPS…KSDPLFEDRL (271 aa)). N-linked (GlcNAc...) asparagine; by host glycosylation is found at N34, N48, N95, N104, N148, N179, N198, N217, N225, N241, N244, and N260. The Ig-like V-type domain maps to 91-190 (QVSLNATCKV…TWDLFTYPIY (100 aa)). A helical transmembrane segment spans residues 295-317 (LAYGVLAFLVFMVIILLYVTYML). At 318–345 (ARRRDWSYKRLEEPVEEKKHPVPYFKQW) the chain is on the intravirion side.

Its subcellular location is the virion membrane. Its function is as follows. Serves as a receptor for the Fc part of human IgG. May thus be involved in interfering with host Ig-mediated immune responses. The chain is Viral Fc-gamma receptor-like protein UL119 (UL119/UL118) from Human cytomegalovirus (strain AD169) (HHV-5).